We begin with the raw amino-acid sequence, 632 residues long: Extracellular metalloproteinase 2 (632 aa).

The first 19 residues, 1–19 (MHGLLLAGLAAALPLGVAG), serve as a signal peptide directing secretion. The propeptide occupies 20–244 (LPARQQSGLS…VHNVVDYVAS (225 aa)). Asn270 is a glycosylation site (N-linked (GlcNAc...) asparagine). His429 is a Zn(2+) binding site. Glu430 is an active-site residue. His433 is a Zn(2+) binding site.

The protein belongs to the peptidase M36 family. It depends on Zn(2+) as a cofactor.

It is found in the secreted. Functionally, secreted metalloproteinase probably acting as a virulence factor. In Trichophyton tonsurans (Scalp ringworm fungus), this protein is Extracellular metalloproteinase 2 (MEP2).